The chain runs to 391 residues: MSLNPRDVVIVDFGRTPMGRSKGGMHRNTRAEDMSAHLISKLLERNNKVDPAEVEDVIWGCVNQTLEQGWNIARMASLLTQIPHTSAAQTVSRLCGSSMSALHTAAQAIMTNNGDVFVIGGVEHMGHVSMMHGVDPNPHMSLHAAKASGMMGLTAEMLGKMHGITREQQDAFGLRSHQLAHKATLEGKFKDEIIPMQGYDENGFLKVFDYDETIRPDTTLESLAALKPAFNPKGGTVTAGTSSQITDGASCMIVMSAQRAQDLGIQPLAVIRSMAVAGVDPAIMGYGPVPATQKALKRAGLTIADIDFIELNEAFAAQALPVLKDLKVLDKMNEKVNLHGGAIALGHPFGCSGARISGTLLNVMKQNGGTFGVSTMCIGLGQGIATVFERV.

The active-site Acyl-thioester intermediate is Cys-95. Catalysis depends on proton acceptor residues His-347 and Cys-377.

The protein belongs to the thiolase-like superfamily. Thiolase family. Heterotetramer of two alpha chains (FadB) and two beta chains (FadA).

It localises to the cytoplasm. The enzyme catalyses an acyl-CoA + acetyl-CoA = a 3-oxoacyl-CoA + CoA. The protein operates within lipid metabolism; fatty acid beta-oxidation. Functionally, catalyzes the final step of fatty acid oxidation in which acetyl-CoA is released and the CoA ester of a fatty acid two carbons shorter is formed. In Pseudomonas savastanoi pv. phaseolicola (strain 1448A / Race 6) (Pseudomonas syringae pv. phaseolicola (strain 1448A / Race 6)), this protein is 3-ketoacyl-CoA thiolase.